The following is a 369-amino-acid chain: MATLDVNPQRYQQQLAEKVQRLTDMFAPYQAPELEVFESPDQHYRMRAEFRVWHEGEEMYYIMFNQETREKYRVDQFPAASRLINDLMPLLIDAMKDNESLRRKLFQVDFLSTLSGEILVSLLYHRQLDDAWIENAKALKQRLNDEGFNLNLIGRARKMKIVLDRDYVVEKLDVNGKPYTYQQVENSFTQPNGKVAEKMLEWAVDCTQESQGDLLELYCGNGNFSLALAQNFERVLATELAKPSVESAQYNIAANKIENVQIIRMSAEEFTEAMEGKREFRRLKDNGIDLKSYNCNTIFVDPPRSGMDVDTCKMVQGYERILYISCNPETLKENLDILSETHHITRFALFDQFPYTHHMEAGVMLERKA.

S-adenosyl-L-methionine is bound by residues Gln-190, Tyr-218, Asn-223, Glu-239, and Asp-301. The active-site Nucleophile is the Cys-326. Glu-360 serves as the catalytic Proton acceptor.

Belongs to the class I-like SAM-binding methyltransferase superfamily. RNA M5U methyltransferase family. TrmA subfamily.

The enzyme catalyses uridine(54) in tRNA + S-adenosyl-L-methionine = 5-methyluridine(54) in tRNA + S-adenosyl-L-homocysteine + H(+). It carries out the reaction uridine(341) in tmRNA + S-adenosyl-L-methionine = 5-methyluridine(341) in tmRNA + S-adenosyl-L-homocysteine + H(+). Functionally, dual-specificity methyltransferase that catalyzes the formation of 5-methyluridine at position 54 (m5U54) in all tRNAs, and that of position 341 (m5U341) in tmRNA (transfer-mRNA). The sequence is that of tRNA/tmRNA (uracil-C(5))-methyltransferase from Vibrio vulnificus (strain CMCP6).